Here is a 257-residue protein sequence, read N- to C-terminus: Ribonuclease HII (257 aa).

The RNase H type-2 domain occupies 72–257; the sequence is TYIAGIDEVG…FAPIKDMIQK (186 aa). A divalent metal cation contacts are provided by D78, E79, and D170.

This sequence belongs to the RNase HII family. Mn(2+) is required as a cofactor. It depends on Mg(2+) as a cofactor.

Its subcellular location is the cytoplasm. It catalyses the reaction Endonucleolytic cleavage to 5'-phosphomonoester.. Endonuclease that specifically degrades the RNA of RNA-DNA hybrids. The protein is Ribonuclease HII of Bacillus thuringiensis (strain Al Hakam).